We begin with the raw amino-acid sequence, 473 residues long: MTRPVVTRFAPSPTGFLHIGGGRTALFNWLYARKHGGTMLLRIEDTDRQRSTQEAIDAILDGLKWLGIDWDGATVYQFARAARHREVAEQLLAAGKAYRCYATAEELTAMRDKARAEGRAKLYDGSWRDRDPSEAPAGVKPTIRLKAPLTGETVIEDQVQGRVAWQNENLDDLVLLRGDGTPTYMLAVVVDDHDMGVTHVIRGDDHLINAARQKQIYDAMEWELPVMAHIPLIHGPDGSKLSKRHGALGVDAYRAMGYLPAALRNYLVRLGWSHGDQEIFTTQEMIDAFDLPAIGRSAARFDFAKLESLNGHYIRQSDDHSLVTLLEDLLKYIPQGPAIAAKFDDSIRAKLTQAMPGLKERAKTLIELLDNAGFIFADRPLALDPKAQAVLTPETRQLIGRLRAALEDVSPWTAATTEAAMRAFAEQAGLKLGAVAQPLRVALTGRTTSPGIFDVLAVLGRDECLSRLADQSA.

Residues 11 to 21 (PSPTGFLHIGG) carry the 'HIGH' region motif. The short motif at 240 to 244 (KLSKR) is the 'KMSKS' region element. Residue K243 coordinates ATP.

It belongs to the class-I aminoacyl-tRNA synthetase family. Glutamate--tRNA ligase type 1 subfamily. As to quaternary structure, monomer.

The protein resides in the cytoplasm. It catalyses the reaction tRNA(Glu) + L-glutamate + ATP = L-glutamyl-tRNA(Glu) + AMP + diphosphate. Its function is as follows. Catalyzes the attachment of glutamate to tRNA(Glu) in a two-step reaction: glutamate is first activated by ATP to form Glu-AMP and then transferred to the acceptor end of tRNA(Glu). This is Glutamate--tRNA ligase from Rhodopseudomonas palustris (strain TIE-1).